The following is a 420-amino-acid chain: Serine hydroxymethyltransferase (420 aa).

(6S)-5,6,7,8-tetrahydrofolate contacts are provided by residues Leu123 and 127–129 (GHL). Lys232 carries the N6-(pyridoxal phosphate)lysine modification. (6S)-5,6,7,8-tetrahydrofolate is bound at residue 357–359 (SPF).

It belongs to the SHMT family. In terms of assembly, homodimer. It depends on pyridoxal 5'-phosphate as a cofactor.

Its subcellular location is the cytoplasm. The catalysed reaction is (6R)-5,10-methylene-5,6,7,8-tetrahydrofolate + glycine + H2O = (6S)-5,6,7,8-tetrahydrofolate + L-serine. It participates in one-carbon metabolism; tetrahydrofolate interconversion. The protein operates within amino-acid biosynthesis; glycine biosynthesis; glycine from L-serine: step 1/1. In terms of biological role, catalyzes the reversible interconversion of serine and glycine with tetrahydrofolate (THF) serving as the one-carbon carrier. This reaction serves as the major source of one-carbon groups required for the biosynthesis of purines, thymidylate, methionine, and other important biomolecules. Also exhibits THF-independent aldolase activity toward beta-hydroxyamino acids, producing glycine and aldehydes, via a retro-aldol mechanism. This chain is Serine hydroxymethyltransferase, found in Streptococcus pyogenes serotype M12 (strain MGAS2096).